Here is a 179-residue protein sequence, read N- to C-terminus: Large ribosomal subunit protein uL5 (179 aa).

This sequence belongs to the universal ribosomal protein uL5 family. Part of the 50S ribosomal subunit; part of the 5S rRNA/L5/L18/L25 subcomplex. Contacts the 5S rRNA and the P site tRNA. Forms a bridge to the 30S subunit in the 70S ribosome.

Functionally, this is one of the proteins that bind and probably mediate the attachment of the 5S RNA into the large ribosomal subunit, where it forms part of the central protuberance. In the 70S ribosome it contacts protein S13 of the 30S subunit (bridge B1b), connecting the 2 subunits; this bridge is implicated in subunit movement. Contacts the P site tRNA; the 5S rRNA and some of its associated proteins might help stabilize positioning of ribosome-bound tRNAs. The chain is Large ribosomal subunit protein uL5 from Anoxybacillus flavithermus (strain DSM 21510 / WK1).